We begin with the raw amino-acid sequence, 314 residues long: Ribosomal protein L11 methyltransferase (314 aa).

The S-adenosyl-L-methionine site is built by Thr152, Gly184, Asp206, and Asn248.

It belongs to the methyltransferase superfamily. PrmA family.

The protein resides in the cytoplasm. The catalysed reaction is L-lysyl-[protein] + 3 S-adenosyl-L-methionine = N(6),N(6),N(6)-trimethyl-L-lysyl-[protein] + 3 S-adenosyl-L-homocysteine + 3 H(+). In terms of biological role, methylates ribosomal protein L11. The protein is Ribosomal protein L11 methyltransferase of Geotalea daltonii (strain DSM 22248 / JCM 15807 / FRC-32) (Geobacter daltonii).